Here is a 346-residue protein sequence, read N- to C-terminus: MGENLPLLLSAALGKKVNRPPVWMMRQAGRYMKIYRDLRERYPSFRERSENPELSYEISMQPFLAFKPDGVILFSDILTPLPGMGINFEIIESKGPIIEDPIRNIRQVEKLKELIPNESLSFVGEVLSSLKKDVKNEATVLGFVGAPWTLAAYVVEGKSSKNYSLIKSMAFKEPDLLHKLLDHFAKSIGEYLKYQIKSGAQVVQIFDSWAGQLSPQDYDIFAGPYQKKVVDIVKEEFPDTPIILYISGSAGVLERMAKTGVDIISLDWTVDIEEACKRIPTGIGIQGNVDPGILFGNKDSIKERIDNTFNKVKERKYILNLGHGILPGTPEENAKTFFEHGKKLTY.

Residues 26–30, Phe45, Asp76, Tyr153, Ser208, and His323 contribute to the substrate site; that span reads RQAGR.

This sequence belongs to the uroporphyrinogen decarboxylase family. Homodimer.

It localises to the cytoplasm. The enzyme catalyses uroporphyrinogen III + 4 H(+) = coproporphyrinogen III + 4 CO2. It functions in the pathway porphyrin-containing compound metabolism; protoporphyrin-IX biosynthesis; coproporphyrinogen-III from 5-aminolevulinate: step 4/4. Catalyzes the decarboxylation of four acetate groups of uroporphyrinogen-III to yield coproporphyrinogen-III. In Prochlorococcus marinus subsp. pastoris (strain CCMP1986 / NIES-2087 / MED4), this protein is Uroporphyrinogen decarboxylase.